The chain runs to 433 residues: Glutamate-1-semialdehyde 2,1-aminomutase (433 aa).

Residue Lys-267 is modified to N6-(pyridoxal phosphate)lysine.

The protein belongs to the class-III pyridoxal-phosphate-dependent aminotransferase family. HemL subfamily. As to quaternary structure, homodimer. Requires pyridoxal 5'-phosphate as cofactor.

Its subcellular location is the cytoplasm. It catalyses the reaction (S)-4-amino-5-oxopentanoate = 5-aminolevulinate. The protein operates within porphyrin-containing compound metabolism; protoporphyrin-IX biosynthesis; 5-aminolevulinate from L-glutamyl-tRNA(Glu): step 2/2. The chain is Glutamate-1-semialdehyde 2,1-aminomutase from Syntrophobacter fumaroxidans (strain DSM 10017 / MPOB).